Reading from the N-terminus, the 408-residue chain is Bifunctional polynucleotide phosphatase/kinase (408 aa).

A disordered region spans residues 1 to 38; that stretch reads MSSKKRKSPPQESLTSYFEKSSKSSKKYGSQNKDSDSS. Phosphoserine is present on Ser-8. 2 stretches are compositionally biased toward polar residues: residues 10 to 19 and 28 to 38; these read PQESLTSYFE and YGSQNKDSDSS. Residue 263 to 270 coordinates ATP; it reads GFPSSGKS.

It in the N-terminal section; belongs to the DNA 3' phosphatase family.

It localises to the nucleus. It carries out the reaction a 3'end (2'-deoxyribonucleotide 3'-phosphate)-DNA + H2O = a 3'-end 2'-deoxyribonucleotide-DNA + phosphate. It catalyses the reaction a 5'-end dephospho-2'-deoxyribonucleoside-DNA + ATP = a 5'-end 5'-phospho-2'-deoxyribonucleoside-DNA + ADP + H(+). Functionally, catalyzes the phosphorylation of DNA at 5'-hydroxyl termini and can dephosphorylate its 3'-phosphate termini. Has a role in the repair of breaks in single-stranded DNA. This Schizosaccharomyces pombe (strain 972 / ATCC 24843) (Fission yeast) protein is Bifunctional polynucleotide phosphatase/kinase (pnk1).